A 307-amino-acid polypeptide reads, in one-letter code: MEFVFLGTGAGVPSKGRNVSAIALQLLEERGQTWLFDCGEATQHQILHTSVRPRRIEKIFITHLHGDHIFGLPGLLGSRSFQGGTTPLTVYGPKGIKQFIEVALSVSTTHVKYPLEVVEITEEGTVFEDNEFYVETKRLSHGIECFGYRIVEKDIQGALLVDKLLEMGVKPGPIFKRLKDGEVVELEDGTILNGNEFIGPPQKGRIITILGDTRYCEASRELAQDADVLVHEATFAAEDEQQAHDYFHSTSKQAASIALQANAKRLILTHISSRYQGDTYKELLKEARELFSNTEIATDLKSFPVEK.

The Zn(2+) site is built by histidine 63, histidine 65, aspartate 67, histidine 68, histidine 141, aspartate 212, and histidine 270. Aspartate 67 serves as the catalytic Proton acceptor.

Belongs to the RNase Z family. Homodimer. It depends on Zn(2+) as a cofactor.

The enzyme catalyses Endonucleolytic cleavage of RNA, removing extra 3' nucleotides from tRNA precursor, generating 3' termini of tRNAs. A 3'-hydroxy group is left at the tRNA terminus and a 5'-phosphoryl group is left at the trailer molecule.. In terms of biological role, zinc phosphodiesterase, which displays some tRNA 3'-processing endonuclease activity. Probably involved in tRNA maturation, by removing a 3'-trailer from precursor tRNA. The sequence is that of Ribonuclease Z from Bacillus cereus (strain G9842).